We begin with the raw amino-acid sequence, 230 residues long: Ropporin-1-like protein (230 aa).

In terms of domain architecture, RIIa spans 17–46; sequence PELPDILKQFTKAAIRTQPADVLRWSAGYF.

This sequence belongs to the ropporin family. As to quaternary structure, component of the axonemal radial spoke complex 1 (RS1), at least composed of spoke head proteins RSPH1, RSPH3, RSPH9 and the cilia-specific component RSPH4A or sperm-specific component RSPH6A, spoke stalk proteins RSPH14, DNAJB13, DYDC1, ROPN1L and NME5, and the anchor protein IQUB. Interacts with FSCB; the interaction increases upon spermatozoa capacitation conditions. May interact with AKAP3. Interacts with CFAP61. In terms of processing, sumoylated, sumoylation decreases upon spermatozoa capacitation conditions.

The protein localises to the cell projection. It is found in the cilium. It localises to the flagellum. Functions as part of axonemal radial spoke complexes that play an important part in the motility of sperm and cilia. Important for male fertility. With ROPN1, involved in fibrous sheath integrity and sperm motility, plays a role in PKA-dependent signaling processes required for spermatozoa capacitation. In Homo sapiens (Human), this protein is Ropporin-1-like protein (ROPN1L).